The following is a 501-amino-acid chain: MFTLPQKDFRAPTTCLGPTCMQDLGSSHGEDLEGECSRKLDQKLPELRGVGDPAMISSDTSYLSSRGRMIKWFWDSAEEGYRTYHMDEYDEDKNPSGIINLGTSENKLCFDLLSWRLSQRDMQRVEPSLLQYADWRGHLFLREEVAKFLSFYCKSPVPLRPENVVVLNGGASLFSALATVLCEAGEAFLIPTPYYGAITQHVCLYGNIRLAYVYLDSEVTGLDTRPFQLTVEKLEMALREAHSEGVKVKGLILISPQNPLGDVYSPEELQEYLVFAKRHRLHVIVDEVYMLSVFEKSVGYRSVLSLERLPDPQRTHVMWATSKDFGMSGLRFGTLYTENQDVATAVASLCRYHGLSGLVQYQMAQLLRDRDWINQVYLPENHARLKAAHTYVSEELRALGIPFLSRGAGFFIWVDLRKYLPKGTFEEEMLLWRRFLDNKVLLSFGKAFECKEPGWFRFVFSDQVHRLCLGMQRVQQVLAGKSQVAEDPRPSQSQEPSDQRR.

Glu-105 provides a ligand contact to substrate. At Lys-323 the chain carries N6-(pyridoxal phosphate)lysine. The interval 480–501 (GKSQVAEDPRPSQSQEPSDQRR) is disordered. Over residues 490–501 (PSQSQEPSDQRR) the composition is skewed to polar residues.

This sequence belongs to the class-I pyridoxal-phosphate-dependent aminotransferase family.

Functionally, does not catalyze the synthesis of 1-aminocyclopropane-1-carboxylate but is capable of catalyzing the deamination of L-vinylglycine. This Homo sapiens (Human) protein is 1-aminocyclopropane-1-carboxylate synthase-like protein 1 (ACCS).